A 256-amino-acid chain; its full sequence is N-acetyl-D-glucosamine kinase (256 aa).

ATP contacts are provided by residues Gly4–Lys11 and Gly133–Val140. Zn(2+)-binding residues include His157, Cys177, Cys179, and Cys184.

Belongs to the ROK (NagC/XylR) family. NagK subfamily.

The catalysed reaction is N-acetyl-D-glucosamine + ATP = N-acetyl-D-glucosamine 6-phosphate + ADP + H(+). It functions in the pathway cell wall biogenesis; peptidoglycan recycling. In terms of biological role, catalyzes the phosphorylation of N-acetyl-D-glucosamine (GlcNAc) derived from cell-wall degradation, yielding GlcNAc-6-P. This chain is N-acetyl-D-glucosamine kinase (nagK), found in Yersinia pestis bv. Antiqua (strain Nepal516).